Here is a 268-residue protein sequence, read N- to C-terminus: Aliphatic sulfonates import ATP-binding protein SsuB 2 (268 aa).

One can recognise an ABC transporter domain in the interval 16–230 (VQLRNVVRQF…DSGQAGFQSI (215 aa)). 48–55 (GASGSGKT) is a binding site for ATP.

This sequence belongs to the ABC transporter superfamily. Aliphatic sulfonates importer (TC 3.A.1.17.2) family. The complex is composed of two ATP-binding proteins (SsuB), two transmembrane proteins (SsuC) and a solute-binding protein (SsuA).

Its subcellular location is the cell inner membrane. The catalysed reaction is ATP + H2O + aliphatic sulfonate-[sulfonate-binding protein]Side 1 = ADP + phosphate + aliphatic sulfonateSide 2 + [sulfonate-binding protein]Side 1.. Its function is as follows. Part of the ABC transporter complex SsuABC involved in aliphatic sulfonates import. Responsible for energy coupling to the transport system. This chain is Aliphatic sulfonates import ATP-binding protein SsuB 2, found in Pseudomonas savastanoi pv. phaseolicola (strain 1448A / Race 6) (Pseudomonas syringae pv. phaseolicola (strain 1448A / Race 6)).